The sequence spans 333 residues: Ketol-acid reductoisomerase (NADP(+)) (333 aa).

The KARI N-terminal Rossmann domain maps to 2-182; it reads AKIFYDSDCN…GASRAGIILT (181 aa). NADP(+) is bound by residues 25–28, serine 51, serine 53, and 83–86; these read FGSQ and DEKQ. The active site involves histidine 108. Position 134 (glycine 134) interacts with NADP(+). Residues 183–328 enclose the KARI C-terminal knotted domain; it reads TFKEETETDL…KELRKMMPWI (146 aa). Positions 191, 195, 227, and 231 each coordinate Mg(2+). Serine 252 serves as a coordination point for substrate.

The protein belongs to the ketol-acid reductoisomerase family. Mg(2+) is required as a cofactor.

It carries out the reaction (2R)-2,3-dihydroxy-3-methylbutanoate + NADP(+) = (2S)-2-acetolactate + NADPH + H(+). The catalysed reaction is (2R,3R)-2,3-dihydroxy-3-methylpentanoate + NADP(+) = (S)-2-ethyl-2-hydroxy-3-oxobutanoate + NADPH + H(+). It participates in amino-acid biosynthesis; L-isoleucine biosynthesis; L-isoleucine from 2-oxobutanoate: step 2/4. Its pathway is amino-acid biosynthesis; L-valine biosynthesis; L-valine from pyruvate: step 2/4. Its function is as follows. Involved in the biosynthesis of branched-chain amino acids (BCAA). Catalyzes an alkyl-migration followed by a ketol-acid reduction of (S)-2-acetolactate (S2AL) to yield (R)-2,3-dihydroxy-isovalerate. In the isomerase reaction, S2AL is rearranged via a Mg-dependent methyl migration to produce 3-hydroxy-3-methyl-2-ketobutyrate (HMKB). In the reductase reaction, this 2-ketoacid undergoes a metal-dependent reduction by NADPH to yield (R)-2,3-dihydroxy-isovalerate. This Caldicellulosiruptor bescii (strain ATCC BAA-1888 / DSM 6725 / KCTC 15123 / Z-1320) (Anaerocellum thermophilum) protein is Ketol-acid reductoisomerase (NADP(+)).